We begin with the raw amino-acid sequence, 158 residues long: Small ribosomal subunit protein uS7c (158 aa).

Belongs to the universal ribosomal protein uS7 family. Part of the 30S ribosomal subunit.

It is found in the plastid. Its subcellular location is the chloroplast. Functionally, one of the primary rRNA binding proteins, it binds directly to 16S rRNA where it nucleates assembly of the head domain of the 30S subunit. The protein is Small ribosomal subunit protein uS7c (rps7) of Trieres chinensis (Marine centric diatom).